A 426-amino-acid chain; its full sequence is Flotillin-1 (426 aa).

The protein belongs to the band 7/mec-2 family. Flotillin subfamily. In terms of assembly, heterooligomeric complex of flotillins 1 and 2 and caveolins 1 and 2. Expressed in brain and ventral nerve cord from stage 12-16 of embryogenesis.

The protein resides in the cell membrane. It localises to the membrane. Its subcellular location is the caveola. Functionally, may act as a scaffolding protein within caveolar membranes, functionally participating in formation of caveolae or caveolae-like vesicles. The sequence is that of Flotillin-1 from Drosophila melanogaster (Fruit fly).